A 396-amino-acid polypeptide reads, in one-letter code: Alanine racemase (396 aa).

Residue Lys46 is the Proton acceptor; specific for D-alanine of the active site. The residue at position 46 (Lys46) is an N6-(pyridoxal phosphate)lysine. Residue Arg145 coordinates substrate. The Proton acceptor; specific for L-alanine role is filled by Tyr280. Met328 contacts substrate.

This sequence belongs to the alanine racemase family. The cofactor is pyridoxal 5'-phosphate.

It catalyses the reaction L-alanine = D-alanine. Its pathway is amino-acid biosynthesis; D-alanine biosynthesis; D-alanine from L-alanine: step 1/1. Its function is as follows. Catalyzes the interconversion of L-alanine and D-alanine. May also act on other amino acids. The protein is Alanine racemase (alr) of Brucella suis (strain ATCC 23445 / NCTC 10510).